Consider the following 455-residue polypeptide: P2X purinoceptor 5 (455 aa).

At 1–34 the chain is on the cytoplasmic side; it reads MGQAAWKGFVLSLFDYKTAKFVVAKSKKVGLLYR. A helical membrane pass occupies residues 35 to 55; that stretch reads VLQLIILLYLLIWVFLIKKSY. The Extracellular segment spans residues 56-341; it reads QDIDTSLQSA…SIIPTVINIG (286 aa). ATP is bound by residues K69 and K71. An N-linked (GlcNAc...) asparagine glycan is attached at N77. Disulfide bonds link C118–C169, C129–C152, and C135–C163. N157 carries N-linked (GlcNAc...) asparagine glycosylation. T189 provides a ligand contact to ATP. Residue N202 is glycosylated (N-linked (GlcNAc...) asparagine). 2 cysteine pairs are disulfide-bonded: C220–C229 and C263–C272. Positions 294, 296, and 314 each coordinate ATP. The helical transmembrane segment at 342–362 threads the bilayer; it reads SGLALMGAGAFFCDLVLIYLI. The Cytoplasmic segment spans residues 363-455; it reads RKSEFYRDKK…QSQILHPVKT (93 aa). Over residues 384 to 401 the composition is skewed to acidic residues; that stretch reads NVEVEANEMEQERPEDEP. Positions 384–422 are disordered; that stretch reads NVEVEANEMEQERPEDEPLERVRQDEQSQELAQSGRKQN. Residues 412-422 are compositionally biased toward polar residues; sequence QELAQSGRKQN.

It belongs to the P2X receptor family. Functional P2XRs are organized as homomeric and heteromeric trimers. Homotrimer. Forms heterotrimer with P2RX1. Predominantly expressed in heart but are also present in brain, spinal cord and adrenal gland.

Its subcellular location is the cell membrane. It carries out the reaction Na(+)(in) = Na(+)(out). The enzyme catalyses Ca(2+)(in) = Ca(2+)(out). The catalysed reaction is chloride(in) = chloride(out). With respect to regulation, activated by ATP. Slowly desensitizing. Not activated by ATP agonist alpha/beta-methylene-ATP. Highly sensitive to the antagonists suramin and PPADS. Its function is as follows. ATP-gated nonselective transmembrane cation channel. Permeable to potassium, sodium and calcium. Unlike other P2RX receptors, the P2X5 receptor is also permeable to chloride. Acts as an important regulator of inflammatory-related bone loss and osteoclast multinucleation. The protein is P2X purinoceptor 5 (P2rx5) of Rattus norvegicus (Rat).